Reading from the N-terminus, the 299-residue chain is MTIDTELTNGSSESVPFVFIGGGNMAAAIIKGCQNKGFTPKSNIVIGVQTEKSAEKWRQLGYKNVFTNTLEMLERYSTAIYVICVKPQVFEEVVSSWPVNSRPEFIISVMAGVPLKVLNAKLPFVSGNTTIVRLMPNVASSIGAGASTMCYEKNEKIMNQDSHIELAREFAECVGTVELIPERCFNPAMAIGGSSPAWTFMYIESLADGAVAQGLGRAEAKRLAAQAVLGAAQMVLNSNSGFDIETQHFGSLKDMVCSPGGTTIEGVRALEKNGFRYAVMEAVVAASTKADEMAKSLAK.

It belongs to the pyrroline-5-carboxylate reductase family.

The enzyme catalyses L-proline + NADP(+) = (S)-1-pyrroline-5-carboxylate + NADPH + 2 H(+). The catalysed reaction is L-proline + NAD(+) = (S)-1-pyrroline-5-carboxylate + NADH + 2 H(+). It functions in the pathway amino-acid biosynthesis; L-proline biosynthesis; L-proline from L-glutamate 5-semialdehyde: step 1/1. The chain is Putative pyrroline-5-carboxylate reductase 4 from Caenorhabditis elegans.